A 132-amino-acid chain; its full sequence is Glycine cleavage system H protein (132 aa).

The 83-residue stretch at 24-106 folds into the Lipoyl-binding domain; that stretch reads RVRVGITDYA…YGAGWLFELE (83 aa). The residue at position 65 (Lys-65) is an N6-lipoyllysine.

It belongs to the GcvH family. As to quaternary structure, the glycine cleavage system is composed of four proteins: P, T, L and H. (R)-lipoate is required as a cofactor.

Its function is as follows. The glycine cleavage system catalyzes the degradation of glycine. The H protein shuttles the methylamine group of glycine from the P protein to the T protein. This Nocardia farcinica (strain IFM 10152) protein is Glycine cleavage system H protein.